Here is a 147-residue protein sequence, read N- to C-terminus: Large ribosomal subunit protein uL22c (147 aa).

Belongs to the universal ribosomal protein uL22 family. In terms of assembly, part of the 50S ribosomal subunit.

It localises to the plastid. In terms of biological role, this protein binds specifically to 23S rRNA. The globular domain of the protein is located near the polypeptide exit tunnel on the outside of the subunit, while an extended beta-hairpin is found that lines the wall of the exit tunnel in the center of the 70S ribosome. This is Large ribosomal subunit protein uL22c (rpl22) from Cuscuta obtusiflora (Peruvian dodder).